A 235-amino-acid polypeptide reads, in one-letter code: Large ribosomal subunit protein uL1 (235 aa).

It belongs to the universal ribosomal protein uL1 family. As to quaternary structure, part of the 50S ribosomal subunit.

Functionally, binds directly to 23S rRNA. The L1 stalk is quite mobile in the ribosome, and is involved in E site tRNA release. Protein L1 is also a translational repressor protein, it controls the translation of the L11 operon by binding to its mRNA. The protein is Large ribosomal subunit protein uL1 of Arthrobacter sp. (strain FB24).